The primary structure comprises 247 residues: Probable transcriptional regulatory protein LPC_0711 (247 aa).

Belongs to the TACO1 family.

Its subcellular location is the cytoplasm. The sequence is that of Probable transcriptional regulatory protein LPC_0711 from Legionella pneumophila (strain Corby).